The following is a 208-amino-acid chain: MTKGILGEKVGMTQIFTESGEFIPVTVIEATPNVVLQVKTVETDGYEAIQVGFDDKREVLSNKPAKGHVAKANTAPKRFIREFKNIEGLEVGAEITVDIFAAGDVVDVTGTSKGKGFQGVIKRHGQSRGPMAHGSRYHRRPGSMGPVSPNRVFKNKHLAGRMGGNRVTIQNLEIVQVIPEKNVILIKGNVPGAKKSLITIKSAVKAAK.

Residues 117-149 are disordered; it reads FQGVIKRHGQSRGPMAHGSRYHRRPGSMGPVSP.

Belongs to the universal ribosomal protein uL3 family. Part of the 50S ribosomal subunit. Forms a cluster with proteins L14 and L19.

One of the primary rRNA binding proteins, it binds directly near the 3'-end of the 23S rRNA, where it nucleates assembly of the 50S subunit. The polypeptide is Large ribosomal subunit protein uL3 (Streptococcus equi subsp. equi (strain 4047)).